The chain runs to 266 residues: Undecaprenyl-diphosphatase (266 aa).

A run of 8 helical transmembrane segments spans residues 1–21 (MDTF…FLPI), 39–59 (QGLS…VIYF), 87–107 (WWII…KDFI), 114–134 (AEVI…ADKM), 149–169 (ALLI…RSGA), 183–203 (AAAR…AILV), 218–238 (ALIL…HYFL), and 246–266 (MTPF…FIFF).

The protein belongs to the UppP family.

Its subcellular location is the cell inner membrane. It carries out the reaction di-trans,octa-cis-undecaprenyl diphosphate + H2O = di-trans,octa-cis-undecaprenyl phosphate + phosphate + H(+). Catalyzes the dephosphorylation of undecaprenyl diphosphate (UPP). Confers resistance to bacitracin. This chain is Undecaprenyl-diphosphatase, found in Shewanella baltica (strain OS223).